Here is a 70-residue protein sequence, read N- to C-terminus: Small ribosomal subunit protein bS21 (70 aa).

The protein belongs to the bacterial ribosomal protein bS21 family.

This is Small ribosomal subunit protein bS21 from Helicobacter acinonychis (strain Sheeba).